The following is a 94-amino-acid chain: Large ribosomal subunit protein bL27 (94 aa).

The propeptide occupies Met-1–Phe-9.

It belongs to the bacterial ribosomal protein bL27 family. Post-translationally, the N-terminus is cleaved by ribosomal processing cysteine protease Prp.

The protein is Large ribosomal subunit protein bL27 of Staphylococcus epidermidis (strain ATCC 35984 / DSM 28319 / BCRC 17069 / CCUG 31568 / BM 3577 / RP62A).